The following is a 171-amino-acid chain: Lipoprotein signal peptidase (171 aa).

A run of 4 helical transmembrane segments spans residues 12–32, 42–62, 70–90, and 96–116; these read LAWL…KLYF, IVVI…AAFS, WQRW…VVWL, and NETW…GNLY. Active-site residues include Asp-126 and Asp-145. The chain crosses the membrane as a helical span at residues 137–157; sequence YFPAFNVADSAITVGAVMLAL.

The protein belongs to the peptidase A8 family.

The protein resides in the cell inner membrane. The enzyme catalyses Release of signal peptides from bacterial membrane prolipoproteins. Hydrolyzes -Xaa-Yaa-Zaa-|-(S,diacylglyceryl)Cys-, in which Xaa is hydrophobic (preferably Leu), and Yaa (Ala or Ser) and Zaa (Gly or Ala) have small, neutral side chains.. It participates in protein modification; lipoprotein biosynthesis (signal peptide cleavage). In terms of biological role, this protein specifically catalyzes the removal of signal peptides from prolipoproteins. The protein is Lipoprotein signal peptidase of Pseudomonas putida (strain ATCC 47054 / DSM 6125 / CFBP 8728 / NCIMB 11950 / KT2440).